Here is a 510-residue protein sequence, read N- to C-terminus: Cytochrome P450 11B2, mitochondrial (510 aa).

Residues 1 to 34 constitute a mitochondrion transit peptide; sequence MGACDNDFIELHSRVTADVWLARPWQCLHRTRAL. Residue Phe391 coordinates 21-hydroxyprogesterone. Residue Cys457 coordinates heme.

This sequence belongs to the cytochrome P450 family. It depends on heme as a cofactor. Adrenal cortex.

It is found in the mitochondrion inner membrane. The enzyme catalyses a steroid + 2 reduced [adrenodoxin] + O2 + 2 H(+) = an 11beta-hydroxysteroid + 2 oxidized [adrenodoxin] + H2O. It carries out the reaction 21-hydroxyprogesterone + 2 reduced [adrenodoxin] + O2 + 2 H(+) = corticosterone + 2 oxidized [adrenodoxin] + H2O. The catalysed reaction is corticosterone + 2 reduced [adrenodoxin] + O2 + 2 H(+) = 18-hydroxycorticosterone + 2 oxidized [adrenodoxin] + H2O. It catalyses the reaction 18-hydroxycorticosterone + 2 reduced [adrenodoxin] + O2 + 2 H(+) = aldosterone + 2 oxidized [adrenodoxin] + 2 H2O. The enzyme catalyses 11-deoxycortisol + 2 reduced [adrenodoxin] + O2 + 2 H(+) = cortisol + 2 oxidized [adrenodoxin] + H2O. It carries out the reaction cortisol + 2 reduced [adrenodoxin] + O2 + 2 H(+) = 18-hydroxycortisol + 2 oxidized [adrenodoxin] + H2O. The catalysed reaction is 21-hydroxyprogesterone + 2 reduced [adrenodoxin] + O2 + 2 H(+) = 18-hydroxy-11-deoxycorticosterone + 2 oxidized [adrenodoxin] + H2O. It catalyses the reaction 18-hydroxycortisol + 2 reduced [adrenodoxin] + O2 + 2 H(+) = 18-oxocortisol + 2 oxidized [adrenodoxin] + 2 H2O. It functions in the pathway steroid biosynthesis. Its function is as follows. A cytochrome P450 monooxygenase that catalyzes the biosynthesis of aldosterone, the main mineralocorticoid responsible for salt and water homeostasis. Catalyzes three sequential oxidative reactions of 11-deoxycorticosterone (21-hydroxyprogesterone), namely 11-beta hydroxylation, followed by two successive oxidations at C18 yielding 18-hydroxy and then 18-oxo intermediates (that do not leave the enzyme active site during the consecutive hydroxylation reactions), and end with the formation of aldosterone. Can also produce 18-hydroxycortisol and 18-oxocortisol, derived from successive oxidations of cortisol at C18, normally found at very low levels, but significantly increased in primary aldosteronism, the most common form of secondary hypertension. Mechanistically, uses molecular oxygen inserting one oxygen atom into a substrate and reducing the second into a water molecule. Two electrons are provided by NADPH via a two-protein mitochondrial transfer system comprising flavoprotein FDXR (adrenodoxin/ferredoxin reductase) and nonheme iron-sulfur protein FDX1 or FDX2 (adrenodoxin/ferredoxin). Could also be involved in the androgen metabolic pathway. The chain is Cytochrome P450 11B2, mitochondrial (Cyp11b2) from Rattus norvegicus (Rat).